The following is a 221-amino-acid chain: Transcriptional regulator GfcR (221 aa).

The disordered stretch occupies residues 35–59; sequence ASWLVERSQPTDNSQSSSANNPTEA. Over residues 42–57 the composition is skewed to polar residues; sequence SQPTDNSQSSSANNPT.

This sequence belongs to the purine/pyrimidine phosphoribosyltransferase family. GfcR subfamily.

DNA-binding transcriptional regulator that functions as a regulator of central sugar catabolic pathways. In Haloquadratum walsbyi (strain DSM 16790 / HBSQ001), this protein is Transcriptional regulator GfcR.